A 396-amino-acid polypeptide reads, in one-letter code: Ornithine aminotransferase (396 aa).

Position 255 is an N6-(pyridoxal phosphate)lysine (Lys255).

It belongs to the class-III pyridoxal-phosphate-dependent aminotransferase family. OAT subfamily. It depends on pyridoxal 5'-phosphate as a cofactor.

Its subcellular location is the cytoplasm. The catalysed reaction is a 2-oxocarboxylate + L-ornithine = L-glutamate 5-semialdehyde + an L-alpha-amino acid. It functions in the pathway amino-acid biosynthesis; L-proline biosynthesis; L-glutamate 5-semialdehyde from L-ornithine: step 1/1. Catalyzes the interconversion of ornithine to glutamate semialdehyde. This chain is Ornithine aminotransferase, found in Staphylococcus epidermidis (strain ATCC 12228 / FDA PCI 1200).